A 115-amino-acid chain; its full sequence is U3-lycotoxin-Ls1o (115 aa).

Residues 1-20 (MKFVLLFGVLLVTLFSYSSA) form the signal peptide. Positions 21-44 (EMLDDFDQADEDELLSLIEKEEAR) are excised as a propeptide. 4 cysteine pairs are disulfide-bonded: Cys-48/Cys-63, Cys-55/Cys-72, Cys-62/Cys-87, and Cys-74/Cys-85.

It belongs to the neurotoxin 19 (CSTX) family. 01 subfamily. Expressed by the venom gland.

It localises to the secreted. This is U3-lycotoxin-Ls1o from Lycosa singoriensis (Wolf spider).